A 308-amino-acid chain; its full sequence is Cytochrome b (308 aa).

A run of 4 helical transmembrane segments spans residues 1–21, 45–66, 81–101, and 146–166; these read FGSL…LLAT, WLIR…YIHI, WNVG…GYVL, and FFAL…VHLT. His51 and His65 together coordinate heme b. Positions 150 and 164 each coordinate heme b. His169 contacts a ubiquinone. Transmembrane regions (helical) follow at residues 194-214, 256-276, and 288-308; these read MKDI…ALFS, LGGV…PLLH, and LSQI…WVGS.

The protein belongs to the cytochrome b family. In terms of assembly, the cytochrome bc1 complex contains 11 subunits: 3 respiratory subunits (MT-CYB, CYC1 and UQCRFS1), 2 core proteins (UQCRC1 and UQCRC2) and 6 low-molecular weight proteins (UQCRH/QCR6, UQCRB/QCR7, UQCRQ/QCR8, UQCR10/QCR9, UQCR11/QCR10 and a cleavage product of UQCRFS1). This cytochrome bc1 complex then forms a dimer. Heme b is required as a cofactor.

Its subcellular location is the mitochondrion inner membrane. In terms of biological role, component of the ubiquinol-cytochrome c reductase complex (complex III or cytochrome b-c1 complex) that is part of the mitochondrial respiratory chain. The b-c1 complex mediates electron transfer from ubiquinol to cytochrome c. Contributes to the generation of a proton gradient across the mitochondrial membrane that is then used for ATP synthesis. The polypeptide is Cytochrome b (MT-CYB) (Ptiloprora plumbea (Leaden honeyeater)).